The sequence spans 461 residues: Fumarate hydratase class II (461 aa).

Residues 98 to 100 (SGT), 129 to 132 (HPND), 139 to 141 (SSN), and T187 each bind substrate. The active-site Proton donor/acceptor is the H188. The active site involves S318. Residues S319 and 324–326 (KVN) each bind substrate.

It belongs to the class-II fumarase/aspartase family. Fumarase subfamily. In terms of assembly, homotetramer.

Its subcellular location is the cytoplasm. It carries out the reaction (S)-malate = fumarate + H2O. It participates in carbohydrate metabolism; tricarboxylic acid cycle; (S)-malate from fumarate: step 1/1. In terms of biological role, involved in the TCA cycle. Catalyzes the stereospecific interconversion of fumarate to L-malate. This Rickettsia prowazekii (strain Madrid E) protein is Fumarate hydratase class II.